We begin with the raw amino-acid sequence, 290 residues long: UPF0761 membrane protein YihY (290 aa).

6 consecutive transmembrane segments (helical) span residues 44–64 (LLSL…FPMF), 104–124 (VGAC…DSAL), 140–160 (FAVY…SLAI), 183–203 (VLPL…VPTT), 210–230 (AIVG…GFAL), and 244–264 (VLAV…IVLL).

Belongs to the UPF0761 family.

It is found in the cell inner membrane. The sequence is that of UPF0761 membrane protein YihY from Salmonella arizonae (strain ATCC BAA-731 / CDC346-86 / RSK2980).